Here is a 196-residue protein sequence, read N- to C-terminus: Segregation and condensation protein B (196 aa).

This sequence belongs to the ScpB family. In terms of assembly, homodimer. Homodimerization may be required to stabilize the binding of ScpA to the Smc head domains. Component of a cohesin-like complex composed of ScpA, ScpB and the Smc homodimer, in which ScpA and ScpB bind to the head domain of Smc. The presence of the three proteins is required for the association of the complex with DNA.

The protein localises to the cytoplasm. Participates in chromosomal partition during cell division. May act via the formation of a condensin-like complex containing Smc and ScpA that pull DNA away from mid-cell into both cell halves. This is Segregation and condensation protein B from Pediococcus pentosaceus (strain ATCC 25745 / CCUG 21536 / LMG 10740 / 183-1w).